Consider the following 538-residue polypeptide: Chaperonin GroEL (538 aa).

ATP is bound by residues 29 to 32 (TLGP), 86 to 90 (DGTTT), Gly-413, 476 to 478 (NAA), and Asp-492.

The protein belongs to the chaperonin (HSP60) family. Forms a cylinder of 14 subunits composed of two heptameric rings stacked back-to-back. Interacts with the co-chaperonin GroES.

Its subcellular location is the cytoplasm. The enzyme catalyses ATP + H2O + a folded polypeptide = ADP + phosphate + an unfolded polypeptide.. Its function is as follows. Together with its co-chaperonin GroES, plays an essential role in assisting protein folding. The GroEL-GroES system forms a nano-cage that allows encapsulation of the non-native substrate proteins and provides a physical environment optimized to promote and accelerate protein folding. The sequence is that of Chaperonin GroEL from Bacillus sp. (strain PS3).